A 234-amino-acid chain; its full sequence is Superoxide dismutase [Mn], mitochondrial (234 aa).

Residues 1–34 constitute a mitochondrion transit peptide; the sequence is MFSIRSSSRVLLKASSATTRATLNAAASKTFTRS. Residues H60, H108, D198, and H202 each coordinate Mn(2+).

This sequence belongs to the iron/manganese superoxide dismutase family. Homotetramer. Mn(2+) is required as a cofactor.

The protein localises to the mitochondrion matrix. It carries out the reaction 2 superoxide + 2 H(+) = H2O2 + O2. In terms of biological role, destroys superoxide anion radicals which are normally produced within the cells and which are toxic to biological systems. The polypeptide is Superoxide dismutase [Mn], mitochondrial (SOD2) (Candida albicans (Yeast)).